Reading from the N-terminus, the 178-residue chain is MLEGIVRESIGRKSSKALRRDGYLIANIYAKGFKNINAAFKVNDFIKVVKAKTTLPFEVKIADKTYKVVVQDYQKHPVTNALKHVDLRIVLDNEISHYLVPVKIVGVAKGLRNKGILVQSKRRLTVKCAGKDLPNEFVLDVSDLDVNDSLLVRDIKLPDNVSIVENNSVAVVGVSTAQ.

The protein belongs to the bacterial ribosomal protein bL25 family. CTC subfamily. In terms of assembly, part of the 50S ribosomal subunit; part of the 5S rRNA/L5/L18/L25 subcomplex. Contacts the 5S rRNA. Binds to the 5S rRNA independently of L5 and L18.

In terms of biological role, this is one of the proteins that binds to the 5S RNA in the ribosome where it forms part of the central protuberance. The chain is Large ribosomal subunit protein bL25 from Campylobacter hominis (strain ATCC BAA-381 / DSM 21671 / CCUG 45161 / LMG 19568 / NCTC 13146 / CH001A).